The primary structure comprises 943 residues: Glutamate receptor ionotropic, NMDA 1 (943 aa).

Positions 1–20 are cleaved as a signal peptide; it reads MSTMRLLTLALLFSCSFARA. Topologically, residues 21–580 are extracellular; the sequence is ACDPKIVNIG…TLDSFMQPFQ (560 aa). N-linked (GlcNAc...) asparagine glycans are attached at residues Asn-61, Asn-224, Asn-260, Asn-297, Asn-321, Asn-371, Asn-389, Asn-461, Asn-492, and Asn-512. Cys-79 and Cys-329 are joined by a disulfide. Cystine bridges form between Cys-441–Cys-475 and Cys-457–Cys-476. 3 residues coordinate glycine: Pro-537, Thr-539, and Arg-544. A helical membrane pass occupies residues 581-601; sequence STLWLLVGLSVHVVAVMLYLL. Residues 602–623 are Cytoplasmic-facing; the sequence is DRFSPFGRFKVNSEEEEEDALT. Positions 624–645 form an intramembrane region, discontinuously helical; that stretch reads LSSAMWFSWGVLLNSGIGEGAP. Positions 624–645 are pore-forming; the sequence is LSSAMWFSWGVLLNSGIGEGAP. Over 646–651 the chain is Cytoplasmic; that stretch reads RSFSAR. A helical membrane pass occupies residues 652 to 668; the sequence is ILGMVWAGFAMIIVASY. The Extracellular portion of the chain corresponds to 669-833; it reads TANLAAFLVL…NAPATLTFEN (165 aa). The N-linked (GlcNAc...) asparagine glycan is linked to Asn-695. Residues Ser-709 and Asp-753 each coordinate glycine. An intrachain disulfide couples Cys-765 to Cys-819. Asn-792 is a glycosylation site (N-linked (GlcNAc...) asparagine). The helical transmembrane segment at 834–854 threads the bilayer; the sequence is MAGVFMLVAGGIVAGIFLIFI. Over 855–943 the chain is Cytoplasmic; that stretch reads EIAYKRHKDA…LSDPSVSTVV (89 aa). Ser-910, Ser-911, Ser-917, and Ser-918 each carry phosphoserine.

The protein belongs to the glutamate-gated ion channel (TC 1.A.10.1) family. NR1/GRIN1 subfamily. As to quaternary structure, heterotetramer; the NMDAR subunits are modular and harbor tiered domains that function in concert to regulate opening and closing of the cation-selective ion channel pore. Forms heterotetrameric channels composed of two GluN1/zeta subunits (GRIN1), and two identical GluN2/epsilon subunits (GRIN2A, GRIN2B, GRIN2C or GRIN2D) or GluN3 subunits (GRIN3A or GRIN3B) (in vitro). Can also form heterotetrameric channels that contain at least two GluN1 subunits and at least two different GluN2 subunits (or a combination of one GluN2 and one GluN3 subunits) (in vitro). In vivo, the subunit composition may vary in function of the expression levels of the different subunits. Found in a complex with GRIN2A or GRIN2B, GRIN3A and PPP2CB. Found in a complex with GRIN2A or GRIN2B and GRIN3B. Interacts with SNX27 (via PDZ domain); the interaction is required for recycling to the plasma membrane when endocytosed and prevent degradation in lysosomes. Interacts with DLG4 and MPDZ. Interacts with LRFN1 and LRFN2. Interacts with MYZAP. Found in a complex with DLG4 and PRR7. Found in a complex with GRIN2B and PRR7. Interacts with PRR7; the interaction is reduced following NMDA receptor activity. NMDA is probably regulated by C-terminal phosphorylation of an isoform of GRIN1 by PKC. Dephosphorylated on Ser-897 probably by protein phosphatase 2A (PPP2CB). Its phosphorylated state is influenced by the formation of the NMDAR-PPP2CB complex and the NMDAR channel activity.

Its subcellular location is the cell membrane. The protein resides in the postsynaptic cell membrane. The protein localises to the postsynaptic density membrane. It is found in the synaptic cell membrane. It catalyses the reaction Ca(2+)(in) = Ca(2+)(out). The enzyme catalyses Na(+)(in) = Na(+)(out). It carries out the reaction K(+)(in) = K(+)(out). In terms of biological role, component of N-methyl-D-aspartate (NMDA) receptors (NMDARs) that function as heterotetrameric, ligand-gated cation channels with high calcium permeability and voltage-dependent block by Mg(2+). NMDARs participate in synaptic plasticity for learning and memory formation by contributing to the long-term potentiation (LTP). Channel activation requires binding of the neurotransmitter L-glutamate to the GluN2 subunit, glycine or D-serine binding to the GluN1 subunit, plus membrane depolarization to eliminate channel inhibition by Mg(2+). NMDARs mediate simultaneously the potasium efflux and the influx of calcium and sodium. Each GluN2 or GluN3 subunit confers differential attributes to channel properties, including activation, deactivation and desensitization kinetics, pH sensitivity, Ca2(+) permeability, and binding to allosteric modulators. The GluN3 subunits confer distinctive ion channel activation mechanism, which relies exclusively on glycine and does not involve glutamate. The polypeptide is Glutamate receptor ionotropic, NMDA 1 (Canis lupus familiaris (Dog)).